A 386-amino-acid chain; its full sequence is Succinate--CoA ligase [ADP-forming] subunit beta (386 aa).

Residues 9–244 (KEILHKFNVP…YDEEVKEEIE (236 aa)) form the ATP-grasp domain. ATP-binding positions include lysine 46, 53–55 (GRG), glutamate 99, serine 102, and glutamate 107. Asparagine 199 and aspartate 213 together coordinate Mg(2+). Substrate contacts are provided by residues asparagine 264 and 321–323 (GIM).

This sequence belongs to the succinate/malate CoA ligase beta subunit family. In terms of assembly, heterotetramer of two alpha and two beta subunits. Mg(2+) serves as cofactor.

It catalyses the reaction succinate + ATP + CoA = succinyl-CoA + ADP + phosphate. The enzyme catalyses GTP + succinate + CoA = succinyl-CoA + GDP + phosphate. The protein operates within carbohydrate metabolism; tricarboxylic acid cycle; succinate from succinyl-CoA (ligase route): step 1/1. In terms of biological role, succinyl-CoA synthetase functions in the citric acid cycle (TCA), coupling the hydrolysis of succinyl-CoA to the synthesis of either ATP or GTP and thus represents the only step of substrate-level phosphorylation in the TCA. The beta subunit provides nucleotide specificity of the enzyme and binds the substrate succinate, while the binding sites for coenzyme A and phosphate are found in the alpha subunit. The chain is Succinate--CoA ligase [ADP-forming] subunit beta from Wolbachia pipientis subsp. Culex pipiens (strain wPip).